Here is a 198-residue protein sequence, read N- to C-terminus: Outer-membrane lipoprotein carrier protein (198 aa).

A signal peptide spans 1–17 (MKKILLSLCFLSSVAFA).

The protein belongs to the LolA family. In terms of assembly, monomer.

It localises to the periplasm. Its function is as follows. Participates in the translocation of lipoproteins from the inner membrane to the outer membrane. Only forms a complex with a lipoprotein if the residue after the N-terminal Cys is not an aspartate (The Asp acts as a targeting signal to indicate that the lipoprotein should stay in the inner membrane). The polypeptide is Outer-membrane lipoprotein carrier protein (Aliivibrio salmonicida (strain LFI1238) (Vibrio salmonicida (strain LFI1238))).